Consider the following 269-residue polypeptide: 3-methyl-2-oxobutanoate hydroxymethyltransferase (269 aa).

Mg(2+) is bound by residues Asp50 and Asp89. 3-methyl-2-oxobutanoate contacts are provided by residues 50-51 (DS), Asp89, and Lys119. Mg(2+) is bound at residue Glu121. Glu187 acts as the Proton acceptor in catalysis.

The protein belongs to the PanB family. As to quaternary structure, homodecamer; pentamer of dimers. Mg(2+) is required as a cofactor.

The protein localises to the cytoplasm. It catalyses the reaction 3-methyl-2-oxobutanoate + (6R)-5,10-methylene-5,6,7,8-tetrahydrofolate + H2O = 2-dehydropantoate + (6S)-5,6,7,8-tetrahydrofolate. It participates in cofactor biosynthesis; (R)-pantothenate biosynthesis; (R)-pantoate from 3-methyl-2-oxobutanoate: step 1/2. In terms of biological role, catalyzes the reversible reaction in which hydroxymethyl group from 5,10-methylenetetrahydrofolate is transferred onto alpha-ketoisovalerate to form ketopantoate. The sequence is that of 3-methyl-2-oxobutanoate hydroxymethyltransferase from Corynebacterium efficiens (strain DSM 44549 / YS-314 / AJ 12310 / JCM 11189 / NBRC 100395).